A 129-amino-acid chain; its full sequence is Small ribosomal subunit protein uS11 (129 aa).

It belongs to the universal ribosomal protein uS11 family. In terms of assembly, part of the 30S ribosomal subunit. Interacts with proteins S7 and S18. Binds to IF-3.

Its function is as follows. Located on the platform of the 30S subunit, it bridges several disparate RNA helices of the 16S rRNA. Forms part of the Shine-Dalgarno cleft in the 70S ribosome. In Listeria innocua serovar 6a (strain ATCC BAA-680 / CLIP 11262), this protein is Small ribosomal subunit protein uS11.